The chain runs to 871 residues: Ubiquitin carboxyl-terminal hydrolase 8 (871 aa).

In terms of domain architecture, DUSP spans 4-99 (TSPDESPDST…GETGEASVSG (96 aa)). The 591-residue stretch at 279–869 (TGLQNLGNTC…AAYVLFYKRL (591 aa)) folds into the USP domain. The Nucleophile role is filled by Cys-288. Residues 615–650 (ENLENPTEEEATDKTDTDGTTSVEDTNSTDVKETTE) are disordered. His-828 functions as the Proton acceptor in the catalytic mechanism.

The protein belongs to the peptidase C19 family.

The enzyme catalyses Thiol-dependent hydrolysis of ester, thioester, amide, peptide and isopeptide bonds formed by the C-terminal Gly of ubiquitin (a 76-residue protein attached to proteins as an intracellular targeting signal).. Functionally, recognizes and hydrolyzes the peptide bond at the C-terminal Gly of ubiquitin. Involved in the processing of poly-ubiquitin precursors as well as that of ubiquitinated proteins. This is Ubiquitin carboxyl-terminal hydrolase 8 (UBP8) from Arabidopsis thaliana (Mouse-ear cress).